We begin with the raw amino-acid sequence, 125 residues long: S-adenosylmethionine decarboxylase proenzyme (125 aa).

S63 functions as the Schiff-base intermediate with substrate; via pyruvic acid in the catalytic mechanism. S63 is modified (pyruvic acid (Ser); by autocatalysis). H68 acts as the Proton acceptor; for processing activity in catalysis. C83 functions as the Proton donor; for catalytic activity in the catalytic mechanism.

It belongs to the prokaryotic AdoMetDC family. Type 1 subfamily. In terms of assembly, heterotetramer of two alpha and two beta chains arranged as a dimer of alpha/beta heterodimers. The cofactor is pyruvate. Post-translationally, is synthesized initially as an inactive proenzyme. Formation of the active enzyme involves a self-maturation process in which the active site pyruvoyl group is generated from an internal serine residue via an autocatalytic post-translational modification. Two non-identical subunits are generated from the proenzyme in this reaction, and the pyruvate is formed at the N-terminus of the alpha chain, which is derived from the carboxyl end of the proenzyme. The post-translation cleavage follows an unusual pathway, termed non-hydrolytic serinolysis, in which the side chain hydroxyl group of the serine supplies its oxygen atom to form the C-terminus of the beta chain, while the remainder of the serine residue undergoes an oxidative deamination to produce ammonia and the pyruvoyl group blocking the N-terminus of the alpha chain.

The catalysed reaction is S-adenosyl-L-methionine + H(+) = S-adenosyl 3-(methylsulfanyl)propylamine + CO2. The protein operates within amine and polyamine biosynthesis; S-adenosylmethioninamine biosynthesis; S-adenosylmethioninamine from S-adenosyl-L-methionine: step 1/1. Its function is as follows. Catalyzes the decarboxylation of S-adenosylmethionine to S-adenosylmethioninamine (dcAdoMet), the propylamine donor required for the synthesis of the polyamines spermine and spermidine from the diamine putrescine. In Moorella thermoacetica (strain ATCC 39073 / JCM 9320), this protein is S-adenosylmethionine decarboxylase proenzyme.